The primary structure comprises 248 residues: 4-hydroxy-tetrahydrodipicolinate reductase (248 aa).

Residues 9 to 14, 77 to 79, and 104 to 107 contribute to the NAD(+) site; these read GAKGRV, GTT, and APNF. Residue His-134 is the Proton donor/acceptor of the active site. Residue His-135 coordinates (S)-2,3,4,5-tetrahydrodipicolinate. The active-site Proton donor is the Lys-138. 144 to 145 serves as a coordination point for (S)-2,3,4,5-tetrahydrodipicolinate; sequence GT.

Belongs to the DapB family.

The protein resides in the cytoplasm. The enzyme catalyses (S)-2,3,4,5-tetrahydrodipicolinate + NAD(+) + H2O = (2S,4S)-4-hydroxy-2,3,4,5-tetrahydrodipicolinate + NADH + H(+). It catalyses the reaction (S)-2,3,4,5-tetrahydrodipicolinate + NADP(+) + H2O = (2S,4S)-4-hydroxy-2,3,4,5-tetrahydrodipicolinate + NADPH + H(+). The protein operates within amino-acid biosynthesis; L-lysine biosynthesis via DAP pathway; (S)-tetrahydrodipicolinate from L-aspartate: step 4/4. Catalyzes the conversion of 4-hydroxy-tetrahydrodipicolinate (HTPA) to tetrahydrodipicolinate. This Corynebacterium aurimucosum (strain ATCC 700975 / DSM 44827 / CIP 107346 / CN-1) (Corynebacterium nigricans) protein is 4-hydroxy-tetrahydrodipicolinate reductase.